Here is a 297-residue protein sequence, read N- to C-terminus: Phosphatidylglycerol--prolipoprotein diacylglyceryl transferase (297 aa).

4 helical membrane passes run 20 to 40, 57 to 77, 107 to 127, and 133 to 153; these read FITIRWYGLLISVSVLIGLFI, EILPSLIIFSIIGARAYYVIF, WEGGIAIHGGLIGGLISIIFF, and IHLKTFIDILIPSIILGQSIG. Residue arginine 154 participates in a 1,2-diacyl-sn-glycero-3-phospho-(1'-sn-glycerol) binding. Transmembrane regions (helical) follow at residues 193–213, 225–245, and 266–286; these read PTFLYESLWNLLVFIFLILIF, GFISCLYLICYSFGRFWIEGL, and AQFISIFLFSSGLIGIFFLRL.

Belongs to the Lgt family.

It is found in the cell inner membrane. The catalysed reaction is L-cysteinyl-[prolipoprotein] + a 1,2-diacyl-sn-glycero-3-phospho-(1'-sn-glycerol) = an S-1,2-diacyl-sn-glyceryl-L-cysteinyl-[prolipoprotein] + sn-glycerol 1-phosphate + H(+). Its pathway is protein modification; lipoprotein biosynthesis (diacylglyceryl transfer). Functionally, catalyzes the transfer of the diacylglyceryl group from phosphatidylglycerol to the sulfhydryl group of the N-terminal cysteine of a prolipoprotein, the first step in the formation of mature lipoproteins. The sequence is that of Phosphatidylglycerol--prolipoprotein diacylglyceryl transferase from Prochlorococcus marinus (strain MIT 9301).